Here is a 258-residue protein sequence, read N- to C-terminus: Transcriptional repressor AccR (258 aa).

One can recognise an HTH deoR-type domain in the interval 6 to 61 (TQDRQAKIVELLRDEQFLAIGRLTEHFQISVATARRDLSELHEAGLLRRTHGGAVS). The segment at residues 23 to 42 (LAIGRLTEHFQISVATARRD) is a DNA-binding region (H-T-H motif).

Represses opine catabolism and conjugal transfer of the nopaline Ti plasmid pTiC58. This Agrobacterium fabrum (strain C58 / ATCC 33970) (Agrobacterium tumefaciens (strain C58)) protein is Transcriptional repressor AccR (accR).